Reading from the N-terminus, the 1721-residue chain is Intersectin-1 (1721 aa).

One can recognise an EH 1 domain in the interval 21-109 (ERAKHDQQFH…PVMKQQPVAI (89 aa)). The EF-hand 1 domain occupies 53–88 (LPQPVLAQIWALADMNNDGRMDQVEFSIAMKLIKLK). The Ca(2+) site is built by aspartate 66, asparagine 68, aspartate 70, arginine 72, and glutamate 77. Position 203 is a phosphoserine (serine 203). The EH 2 domain occupies 221–310 (SRLKYRQLFN…PEYIPPSFRR (90 aa)). One can recognise an EF-hand 2 domain in the interval 254-289 (LPQAQLASIWNLSDIDQDGKLTAEEFILAMHLIDVA). Positions 267, 269, 271, 273, and 278 each coordinate Ca(2+). The residue at position 318 (serine 318) is a Phosphoserine. 2 disordered regions span residues 322–348 (STSV…KLPV) and 650–701 (QRRA…KQEA). Positions 326 to 702 (DQRLPEEPVL…GEEKGKQEAQ (377 aa)) are KLERQ. The stretch at 355 to 659 (RENFERGNLE…QRRAQERDKQ (305 aa)) forms a coiled coil. Serine 687 carries the post-translational modification Phosphoserine. Residues 740 to 806 (VKVVYYRALY…PANYAEKIPE (67 aa)) form the SH3 1 domain. Residues 836–868 (LAVTSSEPSTTPNNWADFSSTWPTSTNEKPETD) form a disordered region. A compositionally biased stretch (polar residues) spans 838 to 862 (VTSSEPSTTPNNWADFSSTWPTSTN). Phosphothreonine is present on threonine 897. 3 positions are modified to phosphoserine: serine 901, serine 902, and serine 904. Positions 913–971 (VEGLQAQALYPWRAKKDNHLNFNKNDVITVLEQQDMWWFGEVQGQKGWFPKSYVKLISG) constitute an SH3 2 domain. Serine 978, serine 986, and serine 995 each carry phosphoserine. 2 consecutive SH3 domains span residues 1002 to 1060 (VSGE…LKDS) and 1074 to 1138 (KKPE…LLSP). The required for interaction with FCHSD2 stretch occupies residues 1074–1138 (KKPEIAQVIA…PANYVKLLSP (65 aa)). The Bipartite nuclear localization signal; in isoform 2 motif lies at 1104-1127 (RKKNPGGWWEGELQARGKKRQIGW). A Phosphoserine modification is found at serine 1137. The residue at position 1144 (threonine 1144) is a Phosphothreonine. Residues 1155–1214 (AAVCQVIGMYDYTAQNDDELAFNKGQIINVLNKEDPDWWKGEVNGQVGLFPSNYVKLTTD) form the SH3 5 domain. The 187-residue stretch at 1237–1423 (KRQGYIHELI…EELCSQVNEG (187 aa)) folds into the DH domain. Positions 1462 to 1571 (KFLHSGKLYK…WVQKIKAASE (110 aa)) constitute a PH domain. The 117-residue stretch at 1579 to 1695 (KKREKAYLVR…KKDQGSKGPV (117 aa)) folds into the C2 domain. Serine 1645 is subject to Phosphoserine. Residues aspartate 1667, serine 1670, and aspartate 1673 each contribute to the Ca(2+) site.

In terms of assembly, interacts (via DH domain) with CDC42. Interacts (via SH3 domain 1) with WASL. Interacts with dynamin, SNAP25 and SNAP23. Interacts with clathrin-associated proteins and other components of the endocytic machinery, such as SPIN90, EPS15, EPN1, EPN2, STON2, FCHO1, FCHO2 and DAB2. Interacts (via SH3 domains) with REPS1 and SGIP1. Interacts with ARHGAP31. Interacts with ADAM15. Interacts with PRRT2. Interacts (via SH3 domain 4) with FCHSD2 (via SH3 domain 2). Interacts (via SH3 domain 1) with DENND2B. Interacts (via SH3 domains) with CBL. Isoform 2: Interacts with CBL and DNM1. Isoform 2: Interacts with LMNA. Isoform 2: Interacts with importin subunit KPNA1; this is likely to mediate its import into the nucleus. Interacts with DNM2. (Microbial infection) Interacts with vaccinia virus protein A36. Ca(2+) serves as cofactor. In terms of tissue distribution, isoform 1 is expressed almost exclusively in the brain. Isoform 2 is detected in brain, spleen, lung, liver, heart, skeletal muscle and kidney. Isoform 5 is primarily expressed in brain, spleen, lung and kidney (at protein level). Isoform 1 and isoform 2 are detected in brain. Isoform 2 is ubiquitous in adult and fetal tissues with high expression in skeletal muscle, heart, spleen, ovary, testis and all fetal tissues tested and low expression in thymus, blood, lung, liver and pancreas. Isoform 1 is expressed almost exclusively in the brain, in all brain regions. Not expressed in the spinal cord.

It localises to the endomembrane system. It is found in the synapse. The protein resides in the synaptosome. Its subcellular location is the cell projection. The protein localises to the lamellipodium. It localises to the cell membrane. It is found in the membrane. The protein resides in the clathrin-coated pit. Its subcellular location is the recycling endosome. The protein localises to the endosome. It localises to the cytoplasmic vesicle. It is found in the cytoplasm. The protein resides in the nucleus envelope. Adapter protein that provides a link between the endocytic membrane traffic and the actin assembly machinery. Acts as a guanine nucleotide exchange factor (GEF) for CDC42, and thereby stimulates actin nucleation mediated by WASL and the ARP2/3 complex. Plays a role in the assembly and maturation of clathrin-coated vesicles. Recruits FCHSD2 to clathrin-coated pits. Involved in endocytosis of activated EGFR, and probably also other growth factor receptors. Involved in endocytosis of integrin beta-1 (ITGB1) and transferrin receptor (TFR); internalization of ITGB1 as DAB2-dependent cargo but not TFR may involve association with DAB2. Promotes ubiquitination and subsequent degradation of EGFR, and thereby contributes to the down-regulation of EGFR-dependent signaling pathways. In chromaffin cells, required for normal exocytosis of catecholamines. Required for rapid replenishment of release-ready synaptic vesicles at presynaptic active zones. Inhibits ARHGAP31 activity toward RAC1. Functionally, plays a role in synaptic vesicle endocytosis in brain neurons. This chain is Intersectin-1, found in Homo sapiens (Human).